The following is a 255-amino-acid chain: SLA class II histocompatibility antigen, DQ haplotype D alpha chain (255 aa).

Residues 1 to 23 (MVPGRVLMWGALALTAVMSACGG) form the signal peptide. An alpha-1 region spans residues 24-120 (EDIAADHVAS…QVPEVTVFPK (97 aa)). Topologically, residues 24–217 (EDIAADHVAS…IPAPMSELTE (194 aa)) are extracellular. Residues Asn-104 and Asn-144 are each glycosylated (N-linked (GlcNAc...) asparagine). One can recognise an Ig-like C1-type domain in the interval 113 to 205 (PEVTVFPKSP…LDKPLLKHWE (93 aa)). An alpha-2 region spans residues 121–204 (SPVMLGQPNT…GLDKPLLKHW (84 aa)). Cys-133 and Cys-189 are joined by a disulfide. The connecting peptide stretch occupies residues 205–217 (EPEIPAPMSELTE). The chain crosses the membrane as a helical span at residues 218 to 240 (TVVCALGLIVGLVGIVVGTVFII). Topologically, residues 241-255 (QGLRSGGPSRHQGSL) are cytoplasmic.

The protein belongs to the MHC class II family.

It localises to the membrane. This Sus scrofa (Pig) protein is SLA class II histocompatibility antigen, DQ haplotype D alpha chain.